Consider the following 31-residue polypeptide: Photosystem II reaction center protein T (31 aa).

Residues 3 to 23 (SVAYILVLTMTLAVLFFAIAF) form a helical membrane-spanning segment.

The protein belongs to the PsbT family. As to quaternary structure, PSII is composed of 1 copy each of membrane proteins PsbA, PsbB, PsbC, PsbD, PsbE, PsbF, PsbH, PsbI, PsbJ, PsbK, PsbL, PsbM, PsbT, PsbX, PsbY, PsbZ, Psb30/Ycf12, peripheral proteins PsbO, CyanoQ (PsbQ), PsbU, PsbV and a large number of cofactors. It forms dimeric complexes.

The protein resides in the cellular thylakoid membrane. Its function is as follows. Found at the monomer-monomer interface of the photosystem II (PS II) dimer, plays a role in assembly and dimerization of PSII. PSII is a light-driven water plastoquinone oxidoreductase, using light energy to abstract electrons from H(2)O, generating a proton gradient subsequently used for ATP formation. The polypeptide is Photosystem II reaction center protein T (Rippkaea orientalis (strain PCC 8801 / RF-1) (Cyanothece sp. (strain PCC 8801))).